The primary structure comprises 304 residues: Undecaprenyl-diphosphatase (304 aa).

The next 7 helical transmembrane spans lie at 1–21, 54–74, 90–110, 114–134, 192–212, 225–245, and 253–273; these read MSLLAAVFLGVLQAATEFLPV, TTLAVLVYFRTEILSLLAAGL, LAWFIVLGTVPAAVLGKLFEE, ALGNWVIAGSLVVLGLVLLAA, FLLSVPIILGAGGYKLWKTVP, LVGTAVSAVAGYLVIDWLLGW, and LFVVWRIAAGVALAILIWQGV.

Belongs to the UppP family.

The protein resides in the cell inner membrane. It catalyses the reaction di-trans,octa-cis-undecaprenyl diphosphate + H2O = di-trans,octa-cis-undecaprenyl phosphate + phosphate + H(+). Its function is as follows. Catalyzes the dephosphorylation of undecaprenyl diphosphate (UPP). Confers resistance to bacitracin. The chain is Undecaprenyl-diphosphatase from Anaeromyxobacter sp. (strain Fw109-5).